The chain runs to 652 residues: Forkhead box protein O1-A (652 aa).

Disordered regions lie at residues 1–57 (MADA…EPSS), 208–277 (SSWW…NSHS), and 359–406 (NLLS…QQTQ). Positions 41–57 (DSNTSSPAPSVKQEPSS) are enriched in polar residues. The fork-head DNA-binding region spans 134-228 (WGNMSYADLI…KSGKSPRRRA (95 aa)). Basic residues predominate over residues 238–249 (AKSRGRAAKKKL). Positions 362-397 (SPKNPSTGGPGSGSNQSSPSSLMQASPGYSPYSSPG) are enriched in low complexity.

It localises to the cytoplasm. Its subcellular location is the nucleus. In terms of biological role, transcription factor that regulates metabolic homeostasis in response to oxidative stress. Binds to the consensus sequence 5'-TT[G/A]TTTTG-3' and the related Daf-16 family binding element (DBE) with consensus sequence 5'-TT[G/A]TTTAC-3'. Main regulator of redox balance and osteoblast numbers and controls bone mass. Orchestrates the endocrine function of the skeleton in regulating glucose metabolism. May be involved in regulating cellular homeostasis in the eye. May act as a positive regulator of apoptosis in cardiac smooth muscle cells as a result of its transcriptional activation of pro-apoptotic genes. This is Forkhead box protein O1-A (foxo1a) from Danio rerio (Zebrafish).